Consider the following 700-residue polypeptide: Elongation factor G 1 (700 aa).

The region spanning 8–290 (ERYRNIGISA…AVIDYLPSPA (283 aa)) is the tr-type G domain. GTP-binding positions include 17–24 (AHIDAGKT), 88–92 (DTPGH), and 142–145 (NKMD).

Belongs to the TRAFAC class translation factor GTPase superfamily. Classic translation factor GTPase family. EF-G/EF-2 subfamily.

Its subcellular location is the cytoplasm. In terms of biological role, catalyzes the GTP-dependent ribosomal translocation step during translation elongation. During this step, the ribosome changes from the pre-translocational (PRE) to the post-translocational (POST) state as the newly formed A-site-bound peptidyl-tRNA and P-site-bound deacylated tRNA move to the P and E sites, respectively. Catalyzes the coordinated movement of the two tRNA molecules, the mRNA and conformational changes in the ribosome. This is Elongation factor G 1 from Bordetella bronchiseptica (strain ATCC BAA-588 / NCTC 13252 / RB50) (Alcaligenes bronchisepticus).